The primary structure comprises 406 residues: MTWRTTRTLLQPQKLDFNEFEILTSVIEGARIVGIGEGAHFVAEFSLARASLIRYLVERHEFNAIGLECGAIQASRLSEWLNSTAGAHELERFSDTLTFSVYGSVLIWLKSYLRESGRKLQLVGIDLPNTLNPRDDLAQLAEIIQLIDHLMKPHVDMLTHLLASIDGQSAVISSAKWGELETARQEKAISGVTRLKLRLASLAPVLKKHVNSDLFRKASDRIESIEYTLETLRIMKTFFDGTSLEGDTSVRDSYMAGVVDGMVRANPDVKIILLAHNNHLQKTPVSFSGELTAVPMGQHLAERVNYRAIAFTHLGPTVPEMHFPSPKSPLGFSVVTTPADAIREDSMEQYVIDACGTENSCLTLTDAPMEAKRMRSQSASVETKLSEAFDAIVCVTSAGKDSLVAL.

Functionally, this enzyme confers resistance to erythromycin through inactivation by hydrolyzing the lactone ring of the antibiotic. The sequence is that of Erythromycin esterase type I (ereA) from Escherichia coli.